The following is a 315-amino-acid chain: MNYLDFESKIKEIEDKITSLSHVFEDEKTEAEIKKLSKKRFELMESTYSKLTDWQVVQLSRHPDRPYFKDLLPLIFTDFQELHGDRTFGDDLAVIGGLAKLNNKPVMVIGQEKGRDTKSKIKHNFGMMHPEGYRKALRLMKLAEKFNMPVVTFIDTPGAYPGIKAEERGQSEAIARNLLEMSALKVPVVCIVIGEGCSGGALGIGVGDRLLMLQYSYFATISPEGCASILHKTAEKASEVTQMMNITSGRLKELKIVDEVIPEPLGGAHRDYETTATNIRKAVAAELKILSEMTVGQRNSRRYDKLMSFGRFKEA.

The CoA carboxyltransferase C-terminal domain maps to 35 to 289 (KLSKKRFELM…RKAVAAELKI (255 aa)).

This sequence belongs to the AccA family. In terms of assembly, acetyl-CoA carboxylase is a heterohexamer composed of biotin carboxyl carrier protein (AccB), biotin carboxylase (AccC) and two subunits each of ACCase subunit alpha (AccA) and ACCase subunit beta (AccD).

Its subcellular location is the cytoplasm. It carries out the reaction N(6)-carboxybiotinyl-L-lysyl-[protein] + acetyl-CoA = N(6)-biotinyl-L-lysyl-[protein] + malonyl-CoA. Its pathway is lipid metabolism; malonyl-CoA biosynthesis; malonyl-CoA from acetyl-CoA: step 1/1. Functionally, component of the acetyl coenzyme A carboxylase (ACC) complex. First, biotin carboxylase catalyzes the carboxylation of biotin on its carrier protein (BCCP) and then the CO(2) group is transferred by the carboxyltransferase to acetyl-CoA to form malonyl-CoA. This chain is Acetyl-coenzyme A carboxylase carboxyl transferase subunit alpha, found in Francisella tularensis subsp. mediasiatica (strain FSC147).